The chain runs to 496 residues: Splicing factor U2AF 65 kDa subunit (496 aa).

Positions 1-26 are enriched in basic and acidic residues; sequence MSDHQDGMKLEDIERQFLDVAQREGG. The tract at residues 1–142 is disordered; it reads MSDHQDGMKL…PKKYRFWDVP (142 aa). The span at 59–77 shows a compositional bias: basic residues; it reads KKRKRSRSRDRDTRRRSRS. 2 stretches are compositionally biased toward basic and acidic residues: residues 78–96 and 105–138; these read RDRG…DRSR and GGRD…KYRF. RRM domains lie at 184–266, 291–368, and 404–488; these read RRLY…RPRD, NKIF…LACA, and NMVT…YYDV.

As to quaternary structure, forms a heterodimer with the U2AF small subunit.

It localises to the nucleus. Its function is as follows. Necessary for the splicing of pre-mRNA. Binds to the polypyrimidine tract of introns early during spliceosome assembly. The chain is Splicing factor U2AF 65 kDa subunit (uaf-1) from Caenorhabditis elegans.